Here is a 489-residue protein sequence, read N- to C-terminus: Betaine aldehyde dehydrogenase (489 aa).

K(+)-binding residues include Thr26 and Asp93. 150 to 152 (GAW) provides a ligand contact to NAD(+). Lys162 acts as the Charge relay system in catalysis. An NAD(+)-binding site is contributed by 176 to 179 (KPSE). Val180 is a K(+) binding site. An NAD(+)-binding site is contributed by 229 to 232 (GVET). Leu245 is a binding site for K(+). Glu251 (proton acceptor) is an active-site residue. NAD(+)-binding residues include Gly253, Cys285, and Glu386. Cys285 (nucleophile) is an active-site residue. The residue at position 285 (Cys285) is a Cysteine sulfenic acid (-SOH). Residues Lys456 and Gly459 each coordinate K(+). Glu463 acts as the Charge relay system in catalysis.

This sequence belongs to the aldehyde dehydrogenase family. Dimer of dimers. K(+) serves as cofactor.

It catalyses the reaction betaine aldehyde + NAD(+) + H2O = glycine betaine + NADH + 2 H(+). The protein operates within amine and polyamine biosynthesis; betaine biosynthesis via choline pathway; betaine from betaine aldehyde: step 1/1. Its function is as follows. Involved in the biosynthesis of the osmoprotectant glycine betaine. Catalyzes the irreversible oxidation of betaine aldehyde to the corresponding acid. The chain is Betaine aldehyde dehydrogenase from Burkholderia orbicola (strain AU 1054).